Consider the following 338-residue polypeptide: uncharacterized protein (338 aa).

The next 3 helical transmembrane spans lie at 11-31 (ILSL…TFAI), 249-269 (IAVF…IIPA), and 318-338 (VPTP…GLGL).

The protein resides in the cell membrane. This is an uncharacterized protein from Methanocaldococcus jannaschii (strain ATCC 43067 / DSM 2661 / JAL-1 / JCM 10045 / NBRC 100440) (Methanococcus jannaschii).